Here is a 358-residue protein sequence, read N- to C-terminus: Isopentenyl-diphosphate delta-isomerase (358 aa).

12 to 13 (RK) is a binding site for substrate. FMN is bound by residues 69–71 (AMT), serine 99, and asparagine 128. Glutamine 158 serves as a coordination point for substrate. Glutamate 159 is a binding site for Mg(2+). Residues lysine 190, threonine 220, 267–269 (GIR), and 288–289 (AG) each bind FMN.

It belongs to the IPP isomerase type 2 family. As to quaternary structure, homooctamer. Dimer of tetramers. Requires FMN as cofactor. NADPH serves as cofactor. Mg(2+) is required as a cofactor.

The protein localises to the cytoplasm. The catalysed reaction is isopentenyl diphosphate = dimethylallyl diphosphate. Its function is as follows. Involved in the biosynthesis of isoprenoids. Catalyzes the 1,3-allylic rearrangement of the homoallylic substrate isopentenyl (IPP) to its allylic isomer, dimethylallyl diphosphate (DMAPP). The chain is Isopentenyl-diphosphate delta-isomerase from Listeria innocua serovar 6a (strain ATCC BAA-680 / CLIP 11262).